The primary structure comprises 486 residues: UDP-N-acetylmuramate--L-alanine ligase (486 aa).

Residue glycine 129–threonine 135 coordinates ATP.

Belongs to the MurCDEF family.

Its subcellular location is the cytoplasm. It catalyses the reaction UDP-N-acetyl-alpha-D-muramate + L-alanine + ATP = UDP-N-acetyl-alpha-D-muramoyl-L-alanine + ADP + phosphate + H(+). The protein operates within cell wall biogenesis; peptidoglycan biosynthesis. In terms of biological role, cell wall formation. The polypeptide is UDP-N-acetylmuramate--L-alanine ligase (Vibrio cholerae serotype O1 (strain ATCC 39541 / Classical Ogawa 395 / O395)).